A 113-amino-acid chain; its full sequence is MKITLSKRIDLLAFLLPCALALSTTVHAETNKLVIESGDSAQSRQHAAMEKEQWNDTGNLRQKVNKRTEKEWDKADAAFDNRDKCEQSANINAYWEPNTLRCLDRRTGRVITP.

The first 28 residues, 1 to 28 (MKITLSKRIDLLAFLLPCALALSTTVHA), serve as a signal peptide directing secretion.

It belongs to the UPF0482 family.

In Escherichia coli O157:H7, this protein is UPF0482 protein YnfB.